Reading from the N-terminus, the 122-residue chain is Large ribosomal subunit protein uL14c (122 aa).

This sequence belongs to the universal ribosomal protein uL14 family. As to quaternary structure, part of the 50S ribosomal subunit.

It is found in the plastid. Functionally, binds to 23S rRNA. This chain is Large ribosomal subunit protein uL14c, found in Cuscuta gronovii (Common dodder).